A 102-amino-acid polypeptide reads, in one-letter code: ATP-dependent Clp protease adapter protein ClpS (102 aa).

The protein belongs to the ClpS family. Binds to the N-terminal domain of the chaperone ClpA.

Its function is as follows. Involved in the modulation of the specificity of the ClpAP-mediated ATP-dependent protein degradation. This chain is ATP-dependent Clp protease adapter protein ClpS, found in Shewanella loihica (strain ATCC BAA-1088 / PV-4).